A 69-amino-acid chain; its full sequence is Putative membrane protein insertion efficiency factor (69 aa).

Belongs to the UPF0161 family.

The protein resides in the cell inner membrane. Its function is as follows. Could be involved in insertion of integral membrane proteins into the membrane. This Geobacter metallireducens (strain ATCC 53774 / DSM 7210 / GS-15) protein is Putative membrane protein insertion efficiency factor.